The sequence spans 310 residues: Carbamate kinase (310 aa).

It belongs to the carbamate kinase family. In terms of assembly, homodimer.

The protein resides in the cytoplasm. The catalysed reaction is hydrogencarbonate + NH4(+) + ATP = carbamoyl phosphate + ADP + H2O + H(+). It functions in the pathway amino-acid degradation; L-arginine degradation via ADI pathway. The chain is Carbamate kinase from Haemophilus influenzae (strain ATCC 51907 / DSM 11121 / KW20 / Rd).